Consider the following 260-residue polypeptide: Diphthine synthase (260 aa).

Residues L9, D85, I88, 113 to 114 (TA), L168, A208, and H233 each bind S-adenosyl-L-methionine.

The protein belongs to the diphthine synthase family. In terms of assembly, homodimer.

It catalyses the reaction 2-[(3S)-amino-3-carboxypropyl]-L-histidyl-[translation elongation factor 2] + 3 S-adenosyl-L-methionine = diphthine-[translation elongation factor 2] + 3 S-adenosyl-L-homocysteine + 3 H(+). It functions in the pathway protein modification; peptidyl-diphthamide biosynthesis. In terms of biological role, S-adenosyl-L-methionine-dependent methyltransferase that catalyzes the trimethylation of the amino group of the modified target histidine residue in translation elongation factor 2 (EF-2), to form an intermediate called diphthine. The three successive methylation reactions represent the second step of diphthamide biosynthesis. The protein is Diphthine synthase of Halobacterium salinarum (strain ATCC 29341 / DSM 671 / R1).